The chain runs to 599 residues: Elongation factor 4 (599 aa).

The tr-type G domain maps to 2 to 185 (KYIRNFSIIA…RIIIDIPVPQ (184 aa)). Residues 14–19 (NHGKST) and 132–135 (NKID) each bind GTP.

Belongs to the TRAFAC class translation factor GTPase superfamily. Classic translation factor GTPase family. LepA subfamily.

It is found in the cell inner membrane. It catalyses the reaction GTP + H2O = GDP + phosphate + H(+). Functionally, required for accurate and efficient protein synthesis under certain stress conditions. May act as a fidelity factor of the translation reaction, by catalyzing a one-codon backward translocation of tRNAs on improperly translocated ribosomes. Back-translocation proceeds from a post-translocation (POST) complex to a pre-translocation (PRE) complex, thus giving elongation factor G a second chance to translocate the tRNAs correctly. Binds to ribosomes in a GTP-dependent manner. This chain is Elongation factor 4, found in Blochmanniella floridana.